The chain runs to 161 residues: Small heat shock protein hspJ (161 aa).

A sHSP domain is found at 52–161 (SKFTSLNPKL…FEKEIKINIE (110 aa)).

The protein belongs to the small heat shock protein (HSP20) family.

The chain is Small heat shock protein hspJ (hspJ) from Dictyostelium discoideum (Social amoeba).